Reading from the N-terminus, the 258-residue chain is 2-succinyl-6-hydroxy-2,4-cyclohexadiene-1-carboxylate synthase (258 aa).

The protein belongs to the AB hydrolase superfamily. MenH family. In terms of assembly, monomer.

The enzyme catalyses 5-enolpyruvoyl-6-hydroxy-2-succinyl-cyclohex-3-ene-1-carboxylate = (1R,6R)-6-hydroxy-2-succinyl-cyclohexa-2,4-diene-1-carboxylate + pyruvate. It participates in quinol/quinone metabolism; 1,4-dihydroxy-2-naphthoate biosynthesis; 1,4-dihydroxy-2-naphthoate from chorismate: step 3/7. Its pathway is quinol/quinone metabolism; menaquinone biosynthesis. Functionally, catalyzes a proton abstraction reaction that results in 2,5-elimination of pyruvate from 2-succinyl-5-enolpyruvyl-6-hydroxy-3-cyclohexene-1-carboxylate (SEPHCHC) and the formation of 2-succinyl-6-hydroxy-2,4-cyclohexadiene-1-carboxylate (SHCHC). This is 2-succinyl-6-hydroxy-2,4-cyclohexadiene-1-carboxylate synthase from Enterobacter sp. (strain 638).